A 183-amino-acid chain; its full sequence is Neuronal synaptobrevin (183 aa).

Residues 1 to 17 show a composition bias toward low complexity; the sequence is MADAAPAGDAPPNAGAP. The interval 1–32 is disordered; sequence MADAAPAGDAPPNAGAPAGEGGDGEIVGGPHN. Residues 1–106 are Cytoplasmic-facing; it reads MADAAPAGDA…KFWLQNLKMM (106 aa). Residues 18-27 are compositionally biased toward gly residues; the sequence is AGEGGDGEIV. One can recognise a v-SNARE coiled-coil homology domain in the interval 41–101; sequence RLQQTQAQVD…GKLKRKFWLQ (61 aa). The helical transmembrane segment at 107–127 threads the bilayer; it reads IIMGVIGLVVVGIIANKLGLI. Residues 128–183 are Vesicular-facing; that stretch reads GGEQPPQYQYPPQYMQPPPPPPQQPAGGQSSLVDAAGAGDGAGAGGSAGAGDHGGV. A disordered region spans residues 135–183; the sequence is YQYPPQYMQPPPPPPQQPAGGQSSLVDAAGAGDGAGAGGSAGAGDHGGV. Pro residues predominate over residues 141-151; sequence YMQPPPPPPQQ. Over residues 165–183 the composition is skewed to gly residues; it reads AGDGAGAGGSAGAGDHGGV.

It belongs to the synaptobrevin family. Part of the SNARE core complex containing Snap25 and syntaxin. Specifically expressed in neurons and synapses.

It localises to the cytoplasmic vesicle. It is found in the secretory vesicle. The protein resides in the synaptic vesicle membrane. Its subcellular location is the early endosome membrane. Involved in the targeting and/or fusion of transport vesicles to their target membrane. Major SNARE protein of synaptic vesicles which mediates fusion of synaptic vesicles to release neurotransmitters. Essential for fast vesicular exocytosis and activity-dependent neurotransmitter release as well as fast endocytosis that mediates rapid reuse of synaptic vesicles. Also involved in a neuron-specific sort-and-degrade mechanism that promotes endolysosomal degradation and is required for neuronal maintenance. The chain is Neuronal synaptobrevin from Drosophila melanogaster (Fruit fly).